Consider the following 443-residue polypeptide: Protein Z-dependent protease inhibitor (443 aa).

The signal sequence occupies residues 1–23 (MKVVPSLLLSVLLAQVWLVPGLA). Residues 24 to 66 (PSPQSPETPAPQNQTSRVVQAPREEEEDEQEASEEKAGDEEKA) are disordered. N36 is a glycosylation site (N-linked (GlcNAc...) asparagine). S56 is modified (phosphoserine). The span at 56–66 (SEEKAGDEEKA) shows a compositional bias: basic and acidic residues. The interval 136–153 (TKPGLLPSLFKGLRETLS) is heparin-binding. Residues N180 and N295 are each glycosylated (N-linked (GlcNAc...) asparagine).

Belongs to the serpin family. In terms of processing, phosphorylated by FAM20C in the extracellular medium.

The protein resides in the secreted. Functionally, inhibits activity of the coagulation protease factor Xa in the presence of PROZ, calcium and phospholipids. Also inhibits factor XIa in the absence of cofactors. The sequence is that of Protein Z-dependent protease inhibitor (SERPINA10) from Pongo abelii (Sumatran orangutan).